The chain runs to 214 residues: Histidine biosynthesis bifunctional protein HisIE (214 aa).

Positions 1 to 114 (MDLSAVRFDE…LEGEKDLGFV (114 aa)) are phosphoribosyl-AMP cyclohydrolase. A phosphoribosyl-ATP pyrophosphohydrolase region spans residues 115–214 (VGQVYATIKE…RSPYDGSHGN (100 aa)).

The protein in the N-terminal section; belongs to the PRA-CH family. It in the C-terminal section; belongs to the PRA-PH family.

It is found in the cytoplasm. The enzyme catalyses 1-(5-phospho-beta-D-ribosyl)-ATP + H2O = 1-(5-phospho-beta-D-ribosyl)-5'-AMP + diphosphate + H(+). The catalysed reaction is 1-(5-phospho-beta-D-ribosyl)-5'-AMP + H2O = 1-(5-phospho-beta-D-ribosyl)-5-[(5-phospho-beta-D-ribosylamino)methylideneamino]imidazole-4-carboxamide. It functions in the pathway amino-acid biosynthesis; L-histidine biosynthesis; L-histidine from 5-phospho-alpha-D-ribose 1-diphosphate: step 2/9. The protein operates within amino-acid biosynthesis; L-histidine biosynthesis; L-histidine from 5-phospho-alpha-D-ribose 1-diphosphate: step 3/9. The protein is Histidine biosynthesis bifunctional protein HisIE of Thermus thermophilus (strain ATCC BAA-163 / DSM 7039 / HB27).